Reading from the N-terminus, the 610-residue chain is Glutamine--fructose-6-phosphate aminotransferase [isomerizing] (610 aa).

Catalysis depends on Cys-2, which acts as the Nucleophile; for GATase activity. One can recognise a Glutamine amidotransferase type-2 domain in the interval 2–218; that stretch reads CGIVGAVAQR…EGDVAEITRR (217 aa). 2 SIS domains span residues 286-426 and 459-600; these read AADI…EQGR and LATD…VDQP. The active-site For Fru-6P isomerization activity is the Lys-605.

As to quaternary structure, homodimer.

It localises to the cytoplasm. The catalysed reaction is D-fructose 6-phosphate + L-glutamine = D-glucosamine 6-phosphate + L-glutamate. Functionally, catalyzes the first step in hexosamine metabolism, converting fructose-6P into glucosamine-6P using glutamine as a nitrogen source. The polypeptide is Glutamine--fructose-6-phosphate aminotransferase [isomerizing] (Vibrio parahaemolyticus serotype O3:K6 (strain RIMD 2210633)).